Here is a 172-residue protein sequence, read N- to C-terminus: Large ribosomal subunit protein uL10 (172 aa).

The protein belongs to the universal ribosomal protein uL10 family. As to quaternary structure, part of the ribosomal stalk of the 50S ribosomal subunit. The N-terminus interacts with L11 and the large rRNA to form the base of the stalk. The C-terminus forms an elongated spine to which L12 dimers bind in a sequential fashion forming a multimeric L10(L12)X complex.

Forms part of the ribosomal stalk, playing a central role in the interaction of the ribosome with GTP-bound translation factors. The chain is Large ribosomal subunit protein uL10 from Rhodopseudomonas palustris (strain TIE-1).